The sequence spans 414 residues: Transforming growth factor beta-2 proprotein (414 aa).

The first 20 residues, 1–20, serve as a signal peptide directing secretion; that stretch reads MHYCVLSTFLLLHLVPVALS. 3 N-linked (GlcNAc...) asparagine glycosylation sites follow: Asn-72, Asn-140, and Asn-241. Intrachain disulfides connect Cys-309/Cys-318, Cys-317/Cys-380, Cys-346/Cys-411, and Cys-350/Cys-413.

This sequence belongs to the TGF-beta family. As to quaternary structure, interacts with the serine proteases, HTRA1 and HTRA3. Interacts with ASPN. Interacts with MFAP5. Interacts with Transforming growth factor beta-2 (TGF-beta-2) chain; interaction is non-covalent and maintains (TGF-beta-2) in a latent state. Interacts with LRRC32/GARP; leading to regulate activation of TGF-beta-2. Interacts with NREP; the interaction results in a decrease in TGFB2 autoinduction. In terms of assembly, transforming growth factor beta-2: Homodimer; disulfide-linked. Transforming growth factor beta-2: Interacts with TGF-beta receptors (TGFBR1 and TGFBR2), leading to signal transduction. The precursor proprotein is cleaved in the Golgi apparatus to form Transforming growth factor beta-2 (TGF-beta-2) and Latency-associated peptide (LAP) chains, which remain non-covalently linked, rendering TGF-beta-2 inactive.

The protein localises to the secreted. Its subcellular location is the extracellular space. The protein resides in the extracellular matrix. Functionally, precursor of the Latency-associated peptide (LAP) and Transforming growth factor beta-2 (TGF-beta-2) chains, which constitute the regulatory and active subunit of TGF-beta-2, respectively. In terms of biological role, required to maintain the Transforming growth factor beta-2 (TGF-beta-2) chain in a latent state during storage in extracellular matrix. Associates non-covalently with TGF-beta-2 and regulates its activation via interaction with 'milieu molecules', such as LTBP1 and LRRC32/GARP, that control activation of TGF-beta-2. Its function is as follows. Multifunctional protein that regulates various processes such as angiogenesis and heart development. Activation into mature form follows different steps: following cleavage of the proprotein in the Golgi apparatus, Latency-associated peptide (LAP) and Transforming growth factor beta-2 (TGF-beta-2) chains remain non-covalently linked rendering TGF-beta-2 inactive during storage in extracellular matrix. At the same time, LAP chain interacts with 'milieu molecules', such as LTBP1 and LRRC32/GARP, that control activation of TGF-beta-2 and maintain it in a latent state during storage in extracellular milieus. Once activated following release of LAP, TGF-beta-2 acts by binding to TGF-beta receptors (TGFBR1 and TGFBR2), which transduce signal. This chain is Transforming growth factor beta-2 proprotein (Tgfb2), found in Mus musculus (Mouse).